Consider the following 674-residue polypeptide: Penicillin-binding protein activator LpoA (674 aa).

Positions 1–31 are cleaved as a signal peptide; that stretch reads MLSSTFVRTKAGRSKPVRLTAVIAAALFLAG. Residue C32 is the site of N-palmitoyl cysteine attachment. C32 carries S-diacylglycerol cysteine lipidation. A disordered region spans residues 291–349; it reads GVTPSTPVQQQQPASVPEQAAQPASTDPNANGAVSTSAPDAAPVTAAQPSAPSTAPITP. Residues 292 to 315 are compositionally biased toward low complexity; it reads VTPSTPVQQQQPASVPEQAAQPAS. Polar residues predominate over residues 316–328; it reads TDPNANGAVSTSA. Low complexity predominate over residues 331 to 349; sequence AAPVTAAQPSAPSTAPITP.

Belongs to the LpoA family. As to quaternary structure, interacts with PBP1a.

Its subcellular location is the cell outer membrane. Its function is as follows. Regulator of peptidoglycan synthesis that is essential for the function of penicillin-binding protein 1A (PBP1a). The chain is Penicillin-binding protein activator LpoA from Serratia proteamaculans (strain 568).